The chain runs to 208 residues: Small ribosomal subunit protein uS4 (208 aa).

The S4 RNA-binding domain maps to 95–161; the sequence is MRLDALVLRA…VPLQVAAAGA (67 aa).

This sequence belongs to the universal ribosomal protein uS4 family. In terms of assembly, part of the 30S ribosomal subunit. Contacts protein S5. The interaction surface between S4 and S5 is involved in control of translational fidelity.

In terms of biological role, one of the primary rRNA binding proteins, it binds directly to 16S rRNA where it nucleates assembly of the body of the 30S subunit. Functionally, with S5 and S12 plays an important role in translational accuracy. This Pseudarthrobacter chlorophenolicus (strain ATCC 700700 / DSM 12829 / CIP 107037 / JCM 12360 / KCTC 9906 / NCIMB 13794 / A6) (Arthrobacter chlorophenolicus) protein is Small ribosomal subunit protein uS4.